The primary structure comprises 332 residues: Solute carrier family 25 member 16 (332 aa).

Solcar repeat units lie at residues 34–120, 128–216, and 238–328; these read FYWL…YKTL, SGHV…LKSV, and LKTH…MKQF. A run of 6 helical transmembrane segments spans residues 37-57, 88-108, 134-154, 191-211, 244-264, and 299-319; these read LRSFLAGGIAGCCAKTTVAPL, GFLGLYKGNGAMMIRIFPYGA, LMAGSMAGMTAVICTYPLDMV, GLMPTILGMAPYAGVSFFTFG, LLCGGVAGAIAQTISYPFDVT, and GLYRGLSLNYIRCIPSQAVAF.

Belongs to the mitochondrial carrier (TC 2.A.29) family.

The protein resides in the mitochondrion inner membrane. Its function is as follows. May be involved in the transport of coenzyme A in the mitochondrial matrix. Very little is known about the physiological function of this carrier. The protein is Solute carrier family 25 member 16 of Homo sapiens (Human).